The primary structure comprises 361 residues: S-adenosylmethionine:tRNA ribosyltransferase-isomerase (361 aa).

It belongs to the QueA family. In terms of assembly, monomer.

The protein resides in the cytoplasm. The catalysed reaction is 7-aminomethyl-7-carbaguanosine(34) in tRNA + S-adenosyl-L-methionine = epoxyqueuosine(34) in tRNA + adenine + L-methionine + 2 H(+). It functions in the pathway tRNA modification; tRNA-queuosine biosynthesis. In terms of biological role, transfers and isomerizes the ribose moiety from AdoMet to the 7-aminomethyl group of 7-deazaguanine (preQ1-tRNA) to give epoxyqueuosine (oQ-tRNA). The protein is S-adenosylmethionine:tRNA ribosyltransferase-isomerase of Actinobacillus pleuropneumoniae serotype 5b (strain L20).